Consider the following 660-residue polypeptide: Probable Xaa-Pro aminopeptidase PTRG_10574 (660 aa).

Mn(2+)-binding residues include Asp-274, Asp-285, Glu-435, and Glu-476. A disordered region spans residues 641–660 (SAGSGSTPLWKPHNKQDKKN).

Belongs to the peptidase M24B family. The cofactor is Mn(2+).

It carries out the reaction Release of any N-terminal amino acid, including proline, that is linked to proline, even from a dipeptide or tripeptide.. Its function is as follows. Catalyzes the removal of a penultimate prolyl residue from the N-termini of peptides. The polypeptide is Probable Xaa-Pro aminopeptidase PTRG_10574 (Pyrenophora tritici-repentis (strain Pt-1C-BFP) (Wheat tan spot fungus)).